The primary structure comprises 1257 residues: Insulin receptor substrate 4 (1257 aa).

Residues 78-199 (EVCKRGYLRK…WYLLLSRLIL (122 aa)) enclose the PH domain. In terms of domain architecture, IRS-type PTB spans 231–335 (YKDVWQVIVK…EKMRALCADE (105 aa)). Disordered regions lie at residues 406–653 (VAHS…GGRF), 678–921 (IPEG…SSDY), and 1179–1257 (QDVA…KRGR). The segment covering 408 to 424 (HSRRGRLHLPRGRRSRR) has biased composition (basic residues). The short motif at 487–490 (YMPM) is the YXXM motif 1 element. Residues 495-509 (SGNGRGSGGGQGSNG) are compositionally biased toward gly residues. Residues 510–524 (QGSSSHSSGGNQCSG) are compositionally biased toward low complexity. Gly residues-rich tracts occupy residues 525 to 542 (EGQG…GSGG) and 551 to 599 (GTAG…SGKG). A compositionally biased stretch (pro residues) spans 627–640 (MPPPPPPPPPPPPA). Over residues 641 to 650 (GGTGGKGKSG) the composition is skewed to gly residues. The tract at residues 678 to 800 (IPEGAARGPH…KNPRNPQGGS (123 aa)) is CRK-binding. Short sequence motifs (YXXM motif) lie at residues 700 to 703 (YVPM), 717 to 720 (YMPM), and 743 to 746 (YMMM). Over residues 750 to 761 (VSPPPAPSPPKA) the composition is skewed to pro residues. Basic and acidic residues predominate over residues 763–774 (DTNKEDDSKDND). The YXXM motif 5 signature appears at 779 to 782 (YMFM). Over residues 800–810 (SSSKSWSSYFS) the composition is skewed to low complexity. Polar residues predominate over residues 815 to 826 (FRSSPLGQNDNS). A YXXM motif 6 motif is present at residues 828–831 (YVPM). Basic and acidic residues predominate over residues 840-855 (GLDKEVSYNWDPKDAA). Residues 895–897 (ITK) form a GRB2-binding region. Tyr-921 carries the post-translational modification Phosphotyrosine. Positions 921–924 (YVNM) match the YXXM motif 7 motif. The segment covering 1236–1257 (DTHVRMDFARRDNQFDSPKRGR) has biased composition (basic and acidic residues).

As to quaternary structure, interacts with SOCS6 in response to stimulation with either insulin or IGF1. Interacts with CRK and CRKL. Interaction with CRK is stronger than with CRKL. Interacts with CRK via the phosphorylated YXXM motifs. Interacts with GRB2 and PIK3R1. Interacts with PLC-gamma, SHC1, PTK6, PPP4C and NISCH. Interacts with ASB4; this interaction promotes IRS4 proteasomal degradation. In terms of processing, phosphorylated on tyrosine residues in response to both insulin and IGF1 signaling. Phosphorylated on Tyr-921 in response to FGF2 signaling. Phosphorylation of Tyr-921 is required for GRB2, phospholipase C-gamma and phosphatidylinositol 3-kinase interaction. Post-translationally, ubiquitinated in a ASB4-dependent manner, leading to proteasomal degradation. Expressed in myoblasts. Expressed in liver and hepatocellular carcinoma.

Its subcellular location is the cell membrane. Functionally, acts as an interface between multiple growth factor receptors possessing tyrosine kinase activity, such as insulin receptor, IGF1R and FGFR1, and a complex network of intracellular signaling molecules containing SH2 domains. Involved in the IGF1R mitogenic signaling pathway. Promotes the AKT1 signaling pathway and BAD phosphorylation during insulin stimulation without activation of RPS6KB1 or the inhibition of apoptosis. Interaction with GRB2 enhances insulin-stimulated mitogen-activated protein kinase activity. May be involved in nonreceptor tyrosine kinase signaling in myoblasts. Plays a pivotal role in the proliferation/differentiation of hepatoblastoma cell through EPHB2 activation upon IGF1 stimulation. May play a role in the signal transduction in response to insulin and to a lesser extent in response to IL4 and GH on mitogenesis. Plays a role in growth, reproduction and glucose homeostasis. May act as negative regulators of the IGF1 signaling pathway by suppressing the function of IRS1 and IRS2. This is Insulin receptor substrate 4 (IRS4) from Homo sapiens (Human).